Consider the following 267-residue polypeptide: Serine acetyltransferase (267 aa).

It belongs to the transferase hexapeptide repeat family.

It is found in the cytoplasm. The catalysed reaction is L-serine + acetyl-CoA = O-acetyl-L-serine + CoA. It functions in the pathway amino-acid biosynthesis; L-cysteine biosynthesis; L-cysteine from L-serine: step 1/2. The protein is Serine acetyltransferase (cysE) of Haemophilus influenzae (strain ATCC 51907 / DSM 11121 / KW20 / Rd).